Reading from the N-terminus, the 359-residue chain is Protein Wnt-5a (359 aa).

The first 20 residues, 1–20 (MATTHLTAALALLCALLQVD), serve as a signal peptide directing secretion. Cysteines 83 and 94 form a disulfide. Residues Asn93 and Asn99 are each glycosylated (N-linked (GlcNAc...) asparagine). 10 disulfides stabilise this stretch: Cys133–Cys141, Cys143–Cys161, Cys217–Cys231, Cys219–Cys226, Cys288–Cys319, Cys304–Cys314, Cys318–Cys358, Cys334–Cys349, Cys336–Cys346, and Cys341–Cys342. Ser223 carries the O-palmitoleoyl serine; by PORCN lipid modification. N-linked (GlcNAc...) asparagine glycans are attached at residues Asn291 and Asn305.

This sequence belongs to the Wnt family. Palmitoleoylation is required for efficient binding to frizzled receptors. Depalmitoleoylation leads to Wnt signaling pathway inhibition. Neuroectodermal and non-neuroectodermal tissues.

It localises to the secreted. It is found in the extracellular space. The protein localises to the extracellular matrix. Ligand for members of the frizzled family of seven transmembrane receptors. Can activate or inhibit canonical Wnt signaling, depending on receptor context. Required during embryogenesis for extension of the primary anterior-posterior axis. This is Protein Wnt-5a (WNT-5A) from Ambystoma mexicanum (Axolotl).